The primary structure comprises 511 residues: Ribonuclease Y (511 aa).

The helical transmembrane segment at 3 to 23 (VGILIGIIILGVVGFIQYTLI) threads the bilayer. In terms of domain architecture, KH spans 201–286 (TVHVVALPND…EMVERAIKDV (86 aa)). Residues 327–420 (VLKHSIEVSY…VQAADAISAA (94 aa)) form the HD domain.

The protein belongs to the RNase Y family.

The protein resides in the cell membrane. In terms of biological role, endoribonuclease that initiates mRNA decay. In Clostridium perfringens (strain ATCC 13124 / DSM 756 / JCM 1290 / NCIMB 6125 / NCTC 8237 / Type A), this protein is Ribonuclease Y.